We begin with the raw amino-acid sequence, 428 residues long: C4-dicarboxylate transport protein (428 aa).

The next 8 membrane-spanning stretches (helical) occupy residues 8 to 28 (SLYF…HFYP), 44 to 64 (LIKM…IAGM), 76 to 96 (VALL…LIIV), 142 to 162 (IGAF…LFGF), 184 to 204 (VIFG…FGAM), 222 to 242 (LIIC…GSIA), 326 to 346 (IVHQ…AAGV), and 352 to 372 (IVLA…LALI).

This sequence belongs to the dicarboxylate/amino acid:cation symporter (DAACS) (TC 2.A.23) family.

Its subcellular location is the cell inner membrane. In terms of biological role, responsible for the transport of dicarboxylates such as succinate, fumarate, and malate from the periplasm across the membrane. This chain is C4-dicarboxylate transport protein, found in Shigella dysenteriae serotype 1 (strain Sd197).